Consider the following 331-residue polypeptide: Nodulation protein D 2 (331 aa).

The 58-residue stretch at 6-63 (LDLNLLVALDALMTERSLTAAARKINLSQPAMSAAVARLRSYFRDELFAMRGRKLVPT) folds into the HTH lysR-type domain. A DNA-binding region (H-T-H motif) is located at residues 23-42 (LTAAARKINLSQPAMSAAVA).

This sequence belongs to the LysR transcriptional regulatory family.

Functionally, nodD regulates the expression of the nodABCFE genes which encode other nodulation proteins. NodD is also a negative regulator of its own expression. Binds flavonoids as inducers. This chain is Nodulation protein D 2 (nodD2), found in Bradyrhizobium elkanii.